The primary structure comprises 158 residues: Deoxyuridine 5'-triphosphate nucleotidohydrolase (158 aa).

Substrate contacts are provided by residues 75 to 77 (RSG), Asn88, 92 to 94 (TVD), and Lys102.

It belongs to the dUTPase family. It depends on Mg(2+) as a cofactor.

It carries out the reaction dUTP + H2O = dUMP + diphosphate + H(+). Its pathway is pyrimidine metabolism; dUMP biosynthesis; dUMP from dCTP (dUTP route): step 2/2. Its function is as follows. This enzyme is involved in nucleotide metabolism: it produces dUMP, the immediate precursor of thymidine nucleotides and it decreases the intracellular concentration of dUTP so that uracil cannot be incorporated into DNA. In Bifidobacterium longum subsp. infantis (strain ATCC 15697 / DSM 20088 / JCM 1222 / NCTC 11817 / S12), this protein is Deoxyuridine 5'-triphosphate nucleotidohydrolase.